The sequence spans 258 residues: Regulatory protein RecX (258 aa).

This sequence belongs to the RecX family.

It is found in the cytoplasm. Functionally, modulates RecA activity. The polypeptide is Regulatory protein RecX (Streptococcus pyogenes serotype M3 (strain ATCC BAA-595 / MGAS315)).